The sequence spans 318 residues: Probable RNA methyltransferase At5g51130 (318 aa).

2 disordered regions span residues methionine 1–valine 61 and asparagine 146–glutamate 184. Residues arginine 16–valine 34 are compositionally biased toward basic and acidic residues. Positions glutamine 37–glutamine 52 are enriched in low complexity. The Bin3-type SAM domain occupies aspartate 82–lysine 318.

It belongs to the methyltransferase superfamily.

Functionally, probable RNA methyltransferase. This Arabidopsis thaliana (Mouse-ear cress) protein is Probable RNA methyltransferase At5g51130.